The primary structure comprises 407 residues: Imidazolonepropionase (407 aa).

Residues His-74 and His-76 each coordinate Fe(3+). Zn(2+) is bound by residues His-74 and His-76. 3 residues coordinate 4-imidazolone-5-propanoate: Arg-83, Tyr-146, and His-179. Tyr-146 contacts N-formimidoyl-L-glutamate. A Fe(3+)-binding site is contributed by His-244. His-244 contributes to the Zn(2+) binding site. A 4-imidazolone-5-propanoate-binding site is contributed by Gln-247. Asp-319 contacts Fe(3+). Asp-319 lines the Zn(2+) pocket. Positions 321 and 323 each coordinate N-formimidoyl-L-glutamate. Thr-324 contacts 4-imidazolone-5-propanoate.

This sequence belongs to the metallo-dependent hydrolases superfamily. HutI family. The cofactor is Zn(2+). Fe(3+) serves as cofactor.

It localises to the cytoplasm. The enzyme catalyses 4-imidazolone-5-propanoate + H2O = N-formimidoyl-L-glutamate. Its pathway is amino-acid degradation; L-histidine degradation into L-glutamate; N-formimidoyl-L-glutamate from L-histidine: step 3/3. Its function is as follows. Catalyzes the hydrolytic cleavage of the carbon-nitrogen bond in imidazolone-5-propanoate to yield N-formimidoyl-L-glutamate. It is the third step in the universal histidine degradation pathway. This Salmonella paratyphi C (strain RKS4594) protein is Imidazolonepropionase.